The following is a 237-amino-acid chain: Leucyl/phenylalanyl-tRNA--protein transferase (237 aa).

Belongs to the L/F-transferase family.

The protein localises to the cytoplasm. The catalysed reaction is N-terminal L-lysyl-[protein] + L-leucyl-tRNA(Leu) = N-terminal L-leucyl-L-lysyl-[protein] + tRNA(Leu) + H(+). It catalyses the reaction N-terminal L-arginyl-[protein] + L-leucyl-tRNA(Leu) = N-terminal L-leucyl-L-arginyl-[protein] + tRNA(Leu) + H(+). It carries out the reaction L-phenylalanyl-tRNA(Phe) + an N-terminal L-alpha-aminoacyl-[protein] = an N-terminal L-phenylalanyl-L-alpha-aminoacyl-[protein] + tRNA(Phe). Functionally, functions in the N-end rule pathway of protein degradation where it conjugates Leu, Phe and, less efficiently, Met from aminoacyl-tRNAs to the N-termini of proteins containing an N-terminal arginine or lysine. The chain is Leucyl/phenylalanyl-tRNA--protein transferase from Shewanella baltica (strain OS155 / ATCC BAA-1091).